The sequence spans 149 residues: D-aminoacyl-tRNA deacylase (149 aa).

Residues 137–138 carry the Gly-cisPro motif, important for rejection of L-amino acids motif; sequence GP.

This sequence belongs to the DTD family. As to quaternary structure, homodimer.

It localises to the cytoplasm. It catalyses the reaction glycyl-tRNA(Ala) + H2O = tRNA(Ala) + glycine + H(+). The catalysed reaction is a D-aminoacyl-tRNA + H2O = a tRNA + a D-alpha-amino acid + H(+). Its function is as follows. An aminoacyl-tRNA editing enzyme that deacylates mischarged D-aminoacyl-tRNAs. Also deacylates mischarged glycyl-tRNA(Ala), protecting cells against glycine mischarging by AlaRS. Acts via tRNA-based rather than protein-based catalysis; rejects L-amino acids rather than detecting D-amino acids in the active site. By recycling D-aminoacyl-tRNA to D-amino acids and free tRNA molecules, this enzyme counteracts the toxicity associated with the formation of D-aminoacyl-tRNA entities in vivo and helps enforce protein L-homochirality. In Pediococcus pentosaceus (strain ATCC 25745 / CCUG 21536 / LMG 10740 / 183-1w), this protein is D-aminoacyl-tRNA deacylase.